A 608-amino-acid polypeptide reads, in one-letter code: Albumin 2 (608 aa).

A signal peptide spans 1–14 (MQWLSVCSLLVLLS). Positions 15-18 (VLSR) are excised as a propeptide. 3 consecutive Albumin domains span residues 19–205 (SQAQ…TFQH), 206–398 (AIAK…AGSD), and 402–600 (KITD…KLVS). Disulfide bonds link Cys-26–Cys-72, Cys-71–Cys-80, Cys-93–Cys-108, Cys-107–Cys-118, Cys-142–Cys-187, Cys-186–Cys-195, Cys-218–Cys-264, Cys-263–Cys-271, Cys-283–Cys-299, Cys-298–Cys-309, Cys-336–Cys-381, Cys-380–Cys-389, Cys-414–Cys-460, Cys-459–Cys-471, Cys-484–Cys-500, Cys-499–Cys-510, Cys-537–Cys-582, and Cys-581–Cys-590. Asn-501 carries N-linked (GlcNAc...) asparagine glycosylation.

The protein belongs to the ALB/AFP/VDB family. Plasma.

Its subcellular location is the secreted. Functionally, binds water, Ca(2+), Na(+), K(+), fatty acids, hormones, bilirubin and drugs. Its main function is the regulation of the colloidal osmotic pressure of blood. In Salmo salar (Atlantic salmon), this protein is Albumin 2 (alb2).